Reading from the N-terminus, the 375-residue chain is Chanoclavine-I aldehyde reductase ifgG (375 aa).

FMN contacts are provided by residues 31–33 (PTT), A66, Q108, and H176. The substrate site is built by H176 and N179. Y181 (proton donor) is an active-site residue. FMN-binding positions include K228, G300, 325–326 (GR), and R326. Y353 is a substrate binding site.

The protein belongs to the NADH:flavin oxidoreductase/NADH oxidase family. It depends on FMN as a cofactor.

The enzyme catalyses dihydrochanoclavine-I aldehyde + NADP(+) = chanoclavine-I aldehyde + NADPH + H(+). It functions in the pathway alkaloid biosynthesis; ergot alkaloid biosynthesis. In terms of biological role, chanoclavine-I aldehyde reductase; part of the gene cluster that mediates the biosynthesis of isofumigaclavines, fungal ergot alkaloids. The tryptophan dimethylallyltransferase ifgA catalyzes the first step of ergot alkaloid biosynthesis by condensing dimethylallyl diphosphate (DMAP) and tryptophan to form 4-dimethylallyl-L-tryptophan. The second step is catalyzed by the methyltransferase ifgB that methylates 4-dimethylallyl-L-tryptophan in the presence of S-adenosyl-L-methionine, resulting in the formation of N-methyl-dimethylallyl-L-tryptophan. The catalase ifgD and the FAD-dependent oxidoreductase ifgC then transform N-methyl-dimethylallyl-L-tryptophan to chanoclavine-I which is further oxidized by ifgE in the presence of NAD(+), resulting in the formation of chanoclavine-I aldehyde. The chanoclavine-I aldehyde reductases ifgG and/or fgaOx3 reduce chanoclavine-I aldehyde to dihydrochanoclavine-I aldehyde that spontaneously dehydrates to form 6,8-dimethyl-6,7-didehydroergoline. The festuclavine dehydrogenases ifgF1 and/or ifgF2 then catalyze the reduction of 6,8-dimethyl-6,7-didehydroergoline to form festuclavine. Hydrolysis of festuclavine by a yet undetermined cytochrome P450 monooxygenase (called ifgH) then leads to the formation of isofumigaclavine B which is in turn acetylated by ifgI to isofumigaclavine A. Penicillium roqueforti has interestingly at least two sets of genes for the consumption of chanoclavine-I aldehyde on three different loci, the OYEs ifgG/fgaOx3 and the festuclavine synthase homologs ifgF1/ifgF2. The reason for the duplication of these genes is unclear, probably to ensure the conversion of chanoclavine-I aldehyde by differential gene expression under various environmental conditions. The polypeptide is Chanoclavine-I aldehyde reductase ifgG (Penicillium roqueforti (strain FM164)).